The following is a 113-amino-acid chain: Putative hemolysin E-like protein (113 aa).

It belongs to the hemolysin E family.

This is Putative hemolysin E-like protein from Shigella flexneri.